Consider the following 318-residue polypeptide: Olfactory receptor 2T3 (318 aa).

The Extracellular portion of the chain corresponds to 1–30; sequence MCSGNQTSQNQTASTDFTLTGLFAESKHAA. N-linked (GlcNAc...) asparagine glycosylation is found at N5 and N10. A helical membrane pass occupies residues 31-54; it reads LLYTVTFLLFLMALTGNALLILLI. Topologically, residues 55–62 are cytoplasmic; it reads HSEPRLHT. Residues 63 to 84 traverse the membrane as a helical segment; it reads PMYFFISQLALMDLMYLCVTVP. Over 85-105 the chain is Extracellular; that stretch reads KMLVGQVTGDDTISPSGCGIQ. C102 and C194 are joined by a disulfide. The helical transmembrane segment at 106–125 threads the bilayer; the sequence is MFFYLTLAGAEVFLLAAMAY. Residues 126-144 are Cytoplasmic-facing; it reads DRYAAVCRPLHYPLLMNQR. A helical transmembrane segment spans residues 145-163; the sequence is VCQLLVSACWVLGMVDGLL. The Extracellular portion of the chain corresponds to 164–200; it reads LTPITMSFPFCQSRKILSFFCETPALLKLSCSDVSLY. Residues 201–224 form a helical membrane-spanning segment; that stretch reads KTLMYLCCILMLLAPIMVISSSYT. Residues 225 to 241 are Cytoplasmic-facing; the sequence is LILHLIHRMNSAAGHRK. The helical transmembrane segment at 242-264 threads the bilayer; the sequence is ALATCSSHMIIVLLLFGASFYTY. The Extracellular portion of the chain corresponds to 265 to 277; sequence MLPSSYHTAEQDM. Residues 278 to 297 form a helical membrane-spanning segment; that stretch reads MVSAFYTIFTPVLNPLIYSL. The Cytoplasmic portion of the chain corresponds to 298 to 318; that stretch reads RNKDVTRALRSMMQSRMNQEK.

This sequence belongs to the G-protein coupled receptor 1 family.

The protein resides in the cell membrane. In terms of biological role, odorant receptor. In Homo sapiens (Human), this protein is Olfactory receptor 2T3 (OR2T3).